The chain runs to 140 residues: Organic hydroperoxide resistance protein-like 1 (140 aa).

Belongs to the OsmC/Ohr family.

The protein is Organic hydroperoxide resistance protein-like 1 of Staphylococcus epidermidis (strain ATCC 35984 / DSM 28319 / BCRC 17069 / CCUG 31568 / BM 3577 / RP62A).